We begin with the raw amino-acid sequence, 166 residues long: Large ribosomal subunit protein uL10 (166 aa).

This sequence belongs to the universal ribosomal protein uL10 family. Part of the ribosomal stalk of the 50S ribosomal subunit. The N-terminus interacts with L11 and the large rRNA to form the base of the stalk. The C-terminus forms an elongated spine to which L12 dimers bind in a sequential fashion forming a multimeric L10(L12)X complex.

Functionally, forms part of the ribosomal stalk, playing a central role in the interaction of the ribosome with GTP-bound translation factors. This is Large ribosomal subunit protein uL10 from Geobacillus sp. (strain WCH70).